Here is a 647-residue protein sequence, read N- to C-terminus: NADP-dependent malic enzyme, chloroplastic (647 aa).

Residues 1–61 constitute a chloroplast transit peptide; it reads MMSLNSSSVV…VDGAVKDVNA (61 aa). Y195 (proton donor) is an active-site residue. R248 is an NAD(+) binding site. The active-site Proton acceptor is the K266. A divalent metal cation contacts are provided by E338, D339, and D362. D362 is an NAD(+) binding site. Residue 391 to 407 coordinates NADP(+); that stretch reads LFLGAGEAGTGIAELIA. N503 contacts NAD(+).

It belongs to the malic enzymes family. As to quaternary structure, homotetramer. Requires Mg(2+) as cofactor. The cofactor is Mn(2+).

The protein localises to the plastid. It localises to the chloroplast. The catalysed reaction is (S)-malate + NADP(+) = pyruvate + CO2 + NADPH. The enzyme catalyses oxaloacetate + H(+) = pyruvate + CO2. It functions in the pathway photosynthesis; C3 acid pathway. In terms of biological role, the chloroplastic ME isoform decarboxylates malate shuttled from neighboring mesophyll cells. The CO(2) released is then refixed by ribulose-bisphosphate carboxylase. This pathway eliminates the photorespiratory loss of CO(2) that occurs in most plants. The chain is NADP-dependent malic enzyme, chloroplastic (MODA) from Flaveria pringlei.